Here is a 300-residue protein sequence, read N- to C-terminus: Recombination-associated protein RdgC (300 aa).

Belongs to the RdgC family.

It localises to the cytoplasm. The protein localises to the nucleoid. Its function is as follows. May be involved in recombination. In Janthinobacterium sp. (strain Marseille) (Minibacterium massiliensis), this protein is Recombination-associated protein RdgC.